The following is a 352-amino-acid chain: Phosphoribosylformylglycinamidine cyclo-ligase (352 aa).

This sequence belongs to the AIR synthase family.

It is found in the cytoplasm. The enzyme catalyses 2-formamido-N(1)-(5-O-phospho-beta-D-ribosyl)acetamidine + ATP = 5-amino-1-(5-phospho-beta-D-ribosyl)imidazole + ADP + phosphate + H(+). Its pathway is purine metabolism; IMP biosynthesis via de novo pathway; 5-amino-1-(5-phospho-D-ribosyl)imidazole from N(2)-formyl-N(1)-(5-phospho-D-ribosyl)glycinamide: step 2/2. The sequence is that of Phosphoribosylformylglycinamidine cyclo-ligase from Pseudomonas putida (strain W619).